The following is a 206-amino-acid chain: Protein GET1 (206 aa).

Over 1–4 the chain is Lumenal; it reads MPSL. Residues 5-24 traverse the membrane as a helical segment; sequence LITILLLNIVIYVINTIGAA. At 25–110 the chain is on the cytoplasmic side; that stretch reads TIDSLLWLFY…SFDMTVKSVR (86 aa). A coiled-coil region spans residues 42–99; it reads SHMAREQRRLKREVIQLKREMNATSSQDEFAKWAKLRRRHDKALETYEAKNNELTQCK. A helical transmembrane segment spans residues 111-131; the sequence is WAATSGLMLFLQFWYSKRPIF. Over 132-155 the chain is Lumenal; sequence TLPPGWIPWQVQWVLSFPRAPMGT. The chain crosses the membrane as a helical span at residues 156 to 172; sequence VSIQIWGGACATVVALV. The Cytoplasmic segment spans residues 173–206; it reads GDAVGATMGFVSASKKEGMKVGAGVGEKEGKKSQ.

This sequence belongs to the WRB/GET1 family. Interacts with GET3.

The protein resides in the endoplasmic reticulum membrane. In terms of biological role, required for the post-translational delivery of tail-anchored (TA) proteins to the endoplasmic reticulum. Acts as a membrane receptor for soluble GET3, which recognizes and selectively binds the transmembrane domain of TA proteins in the cytosol. This chain is Protein GET1, found in Ajellomyces dermatitidis (strain ER-3 / ATCC MYA-2586) (Blastomyces dermatitidis).